The sequence spans 239 residues: Fatty acid metabolism regulator protein (239 aa).

Residues 6–74 (QSPAGFAEEY…HGKPTKVNNF (69 aa)) form the HTH gntR-type domain. A DNA-binding region (H-T-H motif) is located at residues 34–53 (ERELSELIGVTRTTLREVLQ).

As to quaternary structure, homodimer.

The protein localises to the cytoplasm. Functionally, multifunctional regulator of fatty acid metabolism. In Klebsiella pneumoniae (strain 342), this protein is Fatty acid metabolism regulator protein.